The following is a 1209-amino-acid chain: Phospholipid-transporting ATPase ID (1209 aa).

The span at 1 to 12 (MTVPKEMPEKWA) shows a compositional bias: basic and acidic residues. Residues 1–36 (MTVPKEMPEKWARAQAPPSWSRKKPSWGTEEERRAR) form a disordered region. Residues 1–64 (MTVPKEMPEK…TSKYNILTFL (64 aa)) are Cytoplasmic-facing. The helical transmembrane segment at 65–86 (PVNLFEQFQEVANTYFLFLLIL) threads the bilayer. Residues 87-92 (QLIPQI) are Exoplasmic loop-facing. A helical transmembrane segment spans residues 93-112 (SSLSWFTTIVPLVLVLTITA). At 113 to 295 (VKDATDDYFR…TSIDRLMNTL (183 aa)) the chain is on the cytoplasmic side. Residues 296-317 (VLWIFGFLVCMGVILAIGNAIW) form a helical membrane-spanning segment. The Exoplasmic loop portion of the chain corresponds to 318–346 (EHEVGMRFQVYLPWDEAVDSAFFSGFLSF). A helical transmembrane segment spans residues 347–368 (WSYIIILNTVVPISLYVSVEVI). The Cytoplasmic portion of the chain corresponds to 369 to 889 (RLGHSYFINW…GRWSYLRMCK (521 aa)). Catalysis depends on aspartate 411, which acts as the 4-aspartylphosphate intermediate. ATP contacts are provided by aspartate 411, lysine 412, threonine 413, glutamate 515, phenylalanine 556, lysine 579, arginine 613, threonine 693, glycine 694, aspartate 695, arginine 807, and lysine 813. Aspartate 411 lines the Mg(2+) pocket. Residue threonine 413 coordinates Mg(2+). Residue aspartate 833 participates in Mg(2+) binding. Residues asparagine 836 and aspartate 837 each contribute to the ATP site. Position 837 (aspartate 837) interacts with Mg(2+). A helical transmembrane segment spans residues 890 to 910 (FLCYFFYKNFAFTMVHFWFGF). Over 911-922 (FCGFSAQTVYDQ) the chain is Exoplasmic loop. A helical transmembrane segment spans residues 923-942 (YFITLYNIVYTSLPVLAMGV). Topologically, residues 943–972 (FDQDVPEQRSMEYPKLYEPGQLNLLFNKRE) are cytoplasmic. The helical transmembrane segment at 973 to 994 (FFICIAQGIYTSVLMFFIPYGV) threads the bilayer. The Exoplasmic loop portion of the chain corresponds to 995-1008 (FADATRDDGTQLAD). Residues 1009-1031 (YQSFAVTVATSLVIVVSVQIGLD) form a helical membrane-spanning segment. At 1032 to 1037 (TGYWTA) the chain is on the cytoplasmic side. Residues 1038–1058 (INHFFIWGSLAVYFAILFAMH) form a helical membrane-spanning segment. Topologically, residues 1059-1078 (SNGLFDMFPNQFRFVGNAQN) are exoplasmic loop. Residues 1079 to 1103 (TLAQPTVWLTIVLTTVVCIMPVVAF) traverse the membrane as a helical segment. The Cytoplasmic portion of the chain corresponds to 1104-1209 (RFLRLNLKPD…SGGADKPLKG (106 aa)). Serine 1175 is modified (phosphoserine). Residues 1181–1209 (SSSWIESLRRKKSDSASSPSGGADKPLKG) form a disordered region. Over residues 1195-1209 (SASSPSGGADKPLKG) the composition is skewed to low complexity.

It belongs to the cation transport ATPase (P-type) (TC 3.A.3) family. Type IV subfamily. As to quaternary structure, component of a P4-ATPase flippase complex which consists of a catalytic alpha subunit ATP8B2 and an accessory beta subunit TMEM30A or TMEM30B. It depends on Mg(2+) as a cofactor. As to expression, isoform 3 is ubiquitous, with highest expression in aorta, cerebellum and uterus.

Its subcellular location is the cell membrane. It is found in the endoplasmic reticulum membrane. The catalysed reaction is ATP + H2O + phospholipidSide 1 = ADP + phosphate + phospholipidSide 2.. It carries out the reaction a 1,2-diacyl-sn-glycero-3-phosphocholine(out) + ATP + H2O = a 1,2-diacyl-sn-glycero-3-phosphocholine(in) + ADP + phosphate + H(+). Its function is as follows. Catalytic component of P4-ATPase flippase complex, which catalyzes the hydrolysis of ATP coupled to the transport of phosphatidylcholine (PC) from the outer to the inner leaflet of the plasma membrane. May contribute to the maintenance of membrane lipid asymmetry. The sequence is that of Phospholipid-transporting ATPase ID from Homo sapiens (Human).